A 347-amino-acid polypeptide reads, in one-letter code: 3-keto-steroid reductase ERG27 (347 aa).

Positions 15, 38, and 44 each coordinate NADP(+). Active-site proton donor residues include Ser-179 and Tyr-202. Tyr-202, Lys-206, and Ser-237 together coordinate NADP(+). Lys-206 (lowers pKa of active site Tyr) is an active-site residue. The residue at position 345 (Thr-345) is a Phosphothreonine.

The protein belongs to the short-chain dehydrogenases/reductases (SDR) family. ERG27 subfamily. Heterotetramer of ERG25, ERG26, ERG27 and ERG28. ERG28 acts as a scaffold to tether ERG27 and other 4,4-demethylation-related enzymes, forming a demethylation enzyme complex, in the endoplasmic reticulum. Interacts with ERG25 and ERG28. Also interacts with ERG7, but only in lipid particles.

The protein localises to the endoplasmic reticulum membrane. It localises to the lipid droplet. It catalyses the reaction 3-dehydro-4alpha-methylzymosterol + NADPH + H(+) = 4alpha-methylzymosterol + NADP(+). It functions in the pathway steroid biosynthesis; zymosterol biosynthesis; zymosterol from lanosterol: step 5/6. In terms of biological role, 3-keto-steroid reductase; part of the third module of ergosterol biosynthesis pathway that includes the late steps of the pathway. ERG27 is a catalytic component of the C-4 demethylation complex that catalyze the reduction of the keto group on the C-3. The third module or late pathway involves the ergosterol synthesis itself through consecutive reactions that mainly occur in the endoplasmic reticulum (ER) membrane. Firstly, the squalene synthase ERG9 catalyzes the condensation of 2 farnesyl pyrophosphate moieties to form squalene, which is the precursor of all steroids. Squalene synthase is crucial for balancing the incorporation of farnesyl diphosphate (FPP) into sterol and nonsterol isoprene synthesis. Secondly, the squalene epoxidase ERG1 catalyzes the stereospecific oxidation of squalene to (S)-2,3-epoxysqualene, which is considered to be a rate-limiting enzyme in steroid biosynthesis. Then, the lanosterol synthase ERG7 catalyzes the cyclization of (S)-2,3 oxidosqualene to lanosterol, a reaction that forms the sterol core. In the next steps, lanosterol is transformed to zymosterol through a complex process involving various demethylation, reduction and desaturation reactions. The lanosterol 14-alpha-demethylase ERG11 (also known as CYP51) catalyzes C14-demethylation of lanosterol to produce 4,4'-dimethyl cholesta-8,14,24-triene-3-beta-ol, which is critical for ergosterol biosynthesis. The C-14 reductase ERG24 reduces the C14=C15 double bond of 4,4-dimethyl-cholesta-8,14,24-trienol to produce 4,4-dimethyl-cholesta-8,24-dienol. 4,4-dimethyl-cholesta-8,24-dienol is substrate of the C-4 demethylation complex ERG25-ERG26-ERG27 in which ERG25 catalyzes the three-step monooxygenation required for the demethylation of 4,4-dimethyl and 4alpha-methylsterols, ERG26 catalyzes the oxidative decarboxylation that results in a reduction of the 3-beta-hydroxy group at the C-3 carbon to an oxo group, and ERG27 is responsible for the reduction of the keto group on the C-3. ERG28 has a role as a scaffold to help anchor ERG25, ERG26 and ERG27 to the endoplasmic reticulum and ERG29 regulates the activity of the iron-containing C4-methylsterol oxidase ERG25. Then, the sterol 24-C-methyltransferase ERG6 catalyzes the methyl transfer from S-adenosyl-methionine to the C-24 of zymosterol to form fecosterol. The C-8 sterol isomerase ERG2 catalyzes the reaction which results in unsaturation at C-7 in the B ring of sterols and thus converts fecosterol to episterol. The sterol-C5-desaturase ERG3 then catalyzes the introduction of a C-5 double bond in the B ring to produce 5-dehydroepisterol. The C-22 sterol desaturase ERG5 further converts 5-dehydroepisterol into ergosta-5,7,22,24(28)-tetraen-3beta-ol by forming the C-22(23) double bond in the sterol side chain. Finally, ergosta-5,7,22,24(28)-tetraen-3beta-ol is substrate of the C-24(28) sterol reductase ERG4 to produce ergosterol. Its function is as follows. Facilitates the association of ERG7 with lipid particles preventing its digestion in the endoplasmic reticulum and the lipid particles. The chain is 3-keto-steroid reductase ERG27 from Saccharomyces cerevisiae (strain ATCC 204508 / S288c) (Baker's yeast).